The sequence spans 275 residues: Large ribosomal subunit protein uL2 (275 aa).

Positions 28–38 (RPYEPLVETKS) are enriched in basic and acidic residues. Disordered stretches follow at residues 28–53 (RPYEPLVETKSKSGGRNNVGRITTRH) and 222–275 (GVAM…RSAK). Basic residues predominate over residues 254–275 (KGHKTRKNKRTDKMIVRRRSAK).

It belongs to the universal ribosomal protein uL2 family. In terms of assembly, part of the 50S ribosomal subunit. Forms a bridge to the 30S subunit in the 70S ribosome.

In terms of biological role, one of the primary rRNA binding proteins. Required for association of the 30S and 50S subunits to form the 70S ribosome, for tRNA binding and peptide bond formation. It has been suggested to have peptidyltransferase activity; this is somewhat controversial. Makes several contacts with the 16S rRNA in the 70S ribosome. This chain is Large ribosomal subunit protein uL2, found in Marinobacter nauticus (strain ATCC 700491 / DSM 11845 / VT8) (Marinobacter aquaeolei).